An 80-amino-acid polypeptide reads, in one-letter code: MSNTKTLEDNISFEEALRELEEIVKKIDNGQESLETAVNSFERGILLKNYCEKKLKEARLKIEKITKLADSTVILEETEV.

It belongs to the XseB family. In terms of assembly, heterooligomer composed of large and small subunits.

Its subcellular location is the cytoplasm. The catalysed reaction is Exonucleolytic cleavage in either 5'- to 3'- or 3'- to 5'-direction to yield nucleoside 5'-phosphates.. Its function is as follows. Bidirectionally degrades single-stranded DNA into large acid-insoluble oligonucleotides, which are then degraded further into small acid-soluble oligonucleotides. The protein is Exodeoxyribonuclease 7 small subunit of Rickettsia typhi (strain ATCC VR-144 / Wilmington).